A 427-amino-acid polypeptide reads, in one-letter code: Cysteate synthase (427 aa).

Residue Lys-104 is modified to N6-(pyridoxal phosphate)lysine. Residues Asn-130 and Thr-382 each coordinate pyridoxal 5'-phosphate.

This sequence belongs to the threonine synthase family. Cysteate synthase subfamily. In terms of assembly, homotrimer. The cofactor is pyridoxal 5'-phosphate.

The catalysed reaction is O-phospho-L-serine + sulfite + H(+) = L-cysteate + phosphate. Its pathway is cofactor biosynthesis; coenzyme M biosynthesis. In terms of biological role, specifically catalyzes the beta-elimination of phosphate from L-phosphoserine and the beta-addition of sulfite to the dehydroalanine intermediate to produce L-cysteate. This chain is Cysteate synthase, found in Methanocella paludicola (strain DSM 17711 / JCM 13418 / NBRC 101707 / SANAE).